The sequence spans 168 residues: Ribonuclease H (168 aa).

Residues Asn10–Ile151 form the RNase H type-1 domain. Mg(2+) is bound by residues Asp19, Glu57, Asp79, and Asp143.

Belongs to the RNase H family. In terms of assembly, monomer. Mg(2+) is required as a cofactor.

It localises to the cytoplasm. It catalyses the reaction Endonucleolytic cleavage to 5'-phosphomonoester.. Endonuclease that specifically degrades the RNA of RNA-DNA hybrids. This chain is Ribonuclease H, found in Orientia tsutsugamushi (strain Boryong) (Rickettsia tsutsugamushi).